The primary structure comprises 163 residues: Globin CTT-Z (163 aa).

Residues 1–16 (MKFFAVLALCIVGAIA) form the signal peptide. The Globin domain maps to 18-162 (PLTSDEAALV…VYTAVFQIVT (145 aa)). Histidine 76 and histidine 111 together coordinate heme b.

Belongs to the globin family.

The sequence is that of Globin CTT-Z (CTT-Z) from Chironomus thummi piger (Midge).